Reading from the N-terminus, the 277-residue chain is S-formylglutathione hydrolase FrmB (277 aa).

Active-site charge relay system residues include serine 145, aspartate 221, and histidine 254.

This sequence belongs to the esterase D family.

The catalysed reaction is S-formylglutathione + H2O = formate + glutathione + H(+). In terms of biological role, serine hydrolase involved in the detoxification of formaldehyde. Hydrolyzes S-formylglutathione to glutathione and formate. The polypeptide is S-formylglutathione hydrolase FrmB (frmB) (Escherichia coli O139:H28 (strain E24377A / ETEC)).